The sequence spans 352 residues: UDP-3-O-acylglucosamine N-acyltransferase (352 aa).

Catalysis depends on H244, which acts as the Proton acceptor.

Belongs to the transferase hexapeptide repeat family. LpxD subfamily. In terms of assembly, homotrimer.

The enzyme catalyses a UDP-3-O-[(3R)-3-hydroxyacyl]-alpha-D-glucosamine + a (3R)-hydroxyacyl-[ACP] = a UDP-2-N,3-O-bis[(3R)-3-hydroxyacyl]-alpha-D-glucosamine + holo-[ACP] + H(+). The protein operates within bacterial outer membrane biogenesis; LPS lipid A biosynthesis. In terms of biological role, catalyzes the N-acylation of UDP-3-O-acylglucosamine using 3-hydroxyacyl-ACP as the acyl donor. Is involved in the biosynthesis of lipid A, a phosphorylated glycolipid that anchors the lipopolysaccharide to the outer membrane of the cell. In Leptospira biflexa serovar Patoc (strain Patoc 1 / Ames), this protein is UDP-3-O-acylglucosamine N-acyltransferase.